The chain runs to 32 residues: Photosystem II reaction center protein T (32 aa).

The chain crosses the membrane as a helical span at residues 3–23 (TLVYTFLLIGTLAVLFAAVFF).

The protein belongs to the PsbT family. In terms of assembly, PSII is composed of 1 copy each of membrane proteins PsbA, PsbB, PsbC, PsbD, PsbE, PsbF, PsbH, PsbI, PsbJ, PsbK, PsbL, PsbM, PsbT, PsbX, PsbY, PsbZ, Psb30/Ycf12, at least 3 peripheral proteins of the oxygen-evolving complex and a large number of cofactors. It forms dimeric complexes.

The protein localises to the plastid. It is found in the chloroplast thylakoid membrane. Found at the monomer-monomer interface of the photosystem II (PS II) dimer, plays a role in assembly and dimerization of PSII. PSII is a light-driven water plastoquinone oxidoreductase, using light energy to abstract electrons from H(2)O, generating a proton gradient subsequently used for ATP formation. This is Photosystem II reaction center protein T from Guillardia theta (Cryptophyte).